The primary structure comprises 301 residues: Phosphatidylglycerol--prolipoprotein diacylglyceryl transferase (301 aa).

4 helical membrane passes run 10–30 (IAFSLGPVKVHWYGLMYLAGF), 57–77 (LLFYAMMGVVLGGRVGYMLFY), 92–112 (VWEGGMSFHGGLIGVLLAVAW), and 119–139 (MHMFDVVDFCAPLVPVGLGFG). Residue arginine 140 coordinates a 1,2-diacyl-sn-glycero-3-phospho-(1'-sn-glycerol). The next 3 helical transmembrane spans lie at 202-222 (PSQLYEAFLEGLVMFIVLWLF), 230-250 (YAVSGLFALLYGVFRFLVEFV), and 264-284 (LTRGQILSLPLIVIGLFLFWL).

This sequence belongs to the Lgt family.

It localises to the cell inner membrane. It catalyses the reaction L-cysteinyl-[prolipoprotein] + a 1,2-diacyl-sn-glycero-3-phospho-(1'-sn-glycerol) = an S-1,2-diacyl-sn-glyceryl-L-cysteinyl-[prolipoprotein] + sn-glycerol 1-phosphate + H(+). Its pathway is protein modification; lipoprotein biosynthesis (diacylglyceryl transfer). In terms of biological role, catalyzes the transfer of the diacylglyceryl group from phosphatidylglycerol to the sulfhydryl group of the N-terminal cysteine of a prolipoprotein, the first step in the formation of mature lipoproteins. The polypeptide is Phosphatidylglycerol--prolipoprotein diacylglyceryl transferase (Xylella fastidiosa (strain M12)).